Here is a 293-residue protein sequence, read N- to C-terminus: Phosphate import ATP-binding protein PstB (293 aa).

The ABC transporter domain maps to Met-46–Ile-288. Gly-78–Ser-85 provides a ligand contact to ATP.

It belongs to the ABC transporter superfamily. Phosphate importer (TC 3.A.1.7) family. The complex is composed of two ATP-binding proteins (PstB), two transmembrane proteins (PstC and PstA) and a solute-binding protein (PstS).

Its subcellular location is the cell inner membrane. It carries out the reaction phosphate(out) + ATP + H2O = ADP + 2 phosphate(in) + H(+). Functionally, part of the ABC transporter complex PstSACB involved in phosphate import. Responsible for energy coupling to the transport system. The polypeptide is Phosphate import ATP-binding protein PstB (Desulfotalea psychrophila (strain LSv54 / DSM 12343)).